A 251-amino-acid polypeptide reads, in one-letter code: UDP-Glc:alpha-D-GlcNAc-diphosphoundecaprenol beta-1,3-glucosyltransferase WfaP (251 aa).

It belongs to the glycosyltransferase 2 family. It depends on Mn(2+) as a cofactor. Mg(2+) is required as a cofactor.

The protein resides in the cell inner membrane. The catalysed reaction is N-acetyl-alpha-D-glucosaminyl-di-trans,octa-cis-undecaprenyl diphosphate + UDP-alpha-D-glucose = beta-D-Glc-(1-&gt;3)-alpha-D-GlcNAc-di-trans,octa-cis-undecaprenyl diphosphate + UDP + H(+). Its pathway is bacterial outer membrane biogenesis; lipopolysaccharide biosynthesis. Catalyzes the addition of Glc, the second sugar moiety of the O56-antigen repeating unit, to GlcNAc-pyrophosphate-undecaprenol. The protein is UDP-Glc:alpha-D-GlcNAc-diphosphoundecaprenol beta-1,3-glucosyltransferase WfaP (wfaP) of Escherichia coli.